We begin with the raw amino-acid sequence, 64 residues long: Large ribosomal subunit protein bL35 (64 aa).

Composition is skewed to basic residues over residues 1 to 15 and 23 to 42; these read MPKA…KRFR and VRQK…KRTR. Residues 1-45 are disordered; it reads MPKAKTHSGASKRFRTTGSGKVVRQKANRRHLLEHKPTKRTRRLD.

Belongs to the bacterial ribosomal protein bL35 family.

The sequence is that of Large ribosomal subunit protein bL35 from Mycolicibacterium vanbaalenii (strain DSM 7251 / JCM 13017 / BCRC 16820 / KCTC 9966 / NRRL B-24157 / PYR-1) (Mycobacterium vanbaalenii).